The following is a 588-amino-acid chain: Beta-(1--&gt;2)glucan export ATP-binding/permease protein NdvA (588 aa).

One can recognise an ABC transmembrane type-1 domain in the interval V21–E301. The next 6 helical transmembrane spans lie at A22–F42, P57–A77, T136–L156, L158–G178, T248–G268, and V272–M292. The ABC transporter domain occupies V335 to T569. Position 368 to 375 (G368 to T375) interacts with ATP.

This sequence belongs to the ABC transporter superfamily. Beta-(1--&gt;2)glucan exporter (TC 3.A.1.108.1) family. Homodimer.

Its subcellular location is the cell inner membrane. It catalyses the reaction [(1-&gt;2)-beta-D-glucosyl](n)(in) + ATP + H2O = [(1-&gt;2)-beta-D-glucosyl](n)(out) + ADP + phosphate + H(+). In terms of biological role, involved in beta-(1--&gt;2)glucan export which is required for crown gall tumor formation. Transmembrane domains (TMD) form a pore in the inner membrane and the ATP-binding domain (NBD) is responsible for energy generation. The polypeptide is Beta-(1--&gt;2)glucan export ATP-binding/permease protein NdvA (Rhizobium radiobacter (Agrobacterium tumefaciens)).